Consider the following 205-residue polypeptide: Cyanate hydratase (205 aa).

Residues Arg133, Glu136, and Ser159 contribute to the active site.

The protein belongs to the cyanase family.

It catalyses the reaction cyanate + hydrogencarbonate + 3 H(+) = NH4(+) + 2 CO2. Its function is as follows. Catalyzes the reaction of cyanate with bicarbonate to produce ammonia and carbon dioxide. This is Cyanate hydratase from Thalassiosira pseudonana (Marine diatom).